The sequence spans 308 residues: Acetaldehyde dehydrogenase 2 (308 aa).

An NAD(+)-binding site is contributed by 9 to 12 (SGNI). Catalysis depends on Cys-127, which acts as the Acyl-thioester intermediate. Residues 158 to 166 (SAGPGTRAN) and Asn-286 each bind NAD(+).

Belongs to the acetaldehyde dehydrogenase family.

It carries out the reaction acetaldehyde + NAD(+) + CoA = acetyl-CoA + NADH + H(+). This chain is Acetaldehyde dehydrogenase 2, found in Parafrankia sp. (strain EAN1pec).